Reading from the N-terminus, the 1208-residue chain is DNA-directed RNA polymerase subunit beta (1208 aa).

It belongs to the RNA polymerase beta chain family. In terms of assembly, the RNAP catalytic core consists of 2 alpha, 1 beta, 1 beta' and 1 omega subunit. When a sigma factor is associated with the core the holoenzyme is formed, which can initiate transcription.

The enzyme catalyses RNA(n) + a ribonucleoside 5'-triphosphate = RNA(n+1) + diphosphate. Its function is as follows. DNA-dependent RNA polymerase catalyzes the transcription of DNA into RNA using the four ribonucleoside triphosphates as substrates. The protein is DNA-directed RNA polymerase subunit beta of Enterococcus faecium (Streptococcus faecium).